The sequence spans 197 residues: Imidazoleglycerol-phosphate dehydratase (197 aa).

The protein belongs to the imidazoleglycerol-phosphate dehydratase family.

It is found in the cytoplasm. It catalyses the reaction D-erythro-1-(imidazol-4-yl)glycerol 3-phosphate = 3-(imidazol-4-yl)-2-oxopropyl phosphate + H2O. It participates in amino-acid biosynthesis; L-histidine biosynthesis; L-histidine from 5-phospho-alpha-D-ribose 1-diphosphate: step 6/9. The polypeptide is Imidazoleglycerol-phosphate dehydratase (Pseudomonas entomophila (strain L48)).